The primary structure comprises 657 residues: Glycogen debranching enzyme (657 aa).

The Nucleophile role is filled by D336. E371 acts as the Proton donor in catalysis. The interval 460-481 is disordered; sequence ANGEENRDGTNNNYSNNHGKEG.

The protein belongs to the glycosyl hydrolase 13 family.

The catalysed reaction is Hydrolysis of (1-&gt;6)-alpha-D-glucosidic linkages to branches with degrees of polymerization of three or four glucose residues in limit dextrin.. Its pathway is glycan degradation; glycogen degradation. Its function is as follows. Removes maltotriose and maltotetraose chains that are attached by 1,6-alpha-linkage to the limit dextrin main chain, generating a debranched limit dextrin. The protein is Glycogen debranching enzyme of Escherichia coli O157:H7.